The chain runs to 114 residues: Large ribosomal subunit protein uL22 (114 aa).

Belongs to the universal ribosomal protein uL22 family. In terms of assembly, part of the 50S ribosomal subunit.

Functionally, this protein binds specifically to 23S rRNA; its binding is stimulated by other ribosomal proteins, e.g. L4, L17, and L20. It is important during the early stages of 50S assembly. It makes multiple contacts with different domains of the 23S rRNA in the assembled 50S subunit and ribosome. Its function is as follows. The globular domain of the protein is located near the polypeptide exit tunnel on the outside of the subunit, while an extended beta-hairpin is found that lines the wall of the exit tunnel in the center of the 70S ribosome. The chain is Large ribosomal subunit protein uL22 from Streptococcus thermophilus (strain CNRZ 1066).